The primary structure comprises 423 residues: Histidine--tRNA ligase 2 (423 aa).

This sequence belongs to the class-II aminoacyl-tRNA synthetase family. As to quaternary structure, homodimer.

It localises to the cytoplasm. It catalyses the reaction tRNA(His) + L-histidine + ATP = L-histidyl-tRNA(His) + AMP + diphosphate + H(+). This chain is Histidine--tRNA ligase 2, found in Bacillus anthracis.